The sequence spans 260 residues: Flagellar basal-body rod protein FlgG (260 aa).

It belongs to the flagella basal body rod proteins family. The basal body constitutes a major portion of the flagellar organelle and consists of four rings (L,P,S, and M) mounted on a central rod. The rod consists of about 26 subunits of FlgG in the distal portion, and FlgB, FlgC and FlgF are thought to build up the proximal portion of the rod with about 6 subunits each.

It localises to the bacterial flagellum basal body. The sequence is that of Flagellar basal-body rod protein FlgG (flgG) from Escherichia coli O157:H7.